The primary structure comprises 97 residues: Down syndrome critical region protein 8 (97 aa).

In terms of tissue distribution, expressed in numerous tissues; not found in breast, heart, small intestine and liver. Isoform 1: Predominantly expressed in the testis. Isoform 3: Predominantly expressed in the testis, at lower level in the placenta, during malignant progression of melanocytic tumors and in several tumors of varying origins. Isoform 4: Predominantly expressed in the testis, at lower level in the placenta, during malignant progression of melanocytic tumors and in several tumors of varying origins. Isoform 5: Predominantly expressed in the testis. Isoform 6: Predominantly expressed in the testis.

This Homo sapiens (Human) protein is Down syndrome critical region protein 8.